The chain runs to 271 residues: 3-methyl-2-oxobutanoate hydroxymethyltransferase (271 aa).

Positions 53 and 92 each coordinate Mg(2+). 3-methyl-2-oxobutanoate contacts are provided by residues 53–54, Asp92, and Lys120; that span reads DS. Glu122 lines the Mg(2+) pocket. Glu189 functions as the Proton acceptor in the catalytic mechanism.

It belongs to the PanB family. In terms of assembly, homodecamer; pentamer of dimers. Requires Mg(2+) as cofactor.

The protein localises to the cytoplasm. It catalyses the reaction 3-methyl-2-oxobutanoate + (6R)-5,10-methylene-5,6,7,8-tetrahydrofolate + H2O = 2-dehydropantoate + (6S)-5,6,7,8-tetrahydrofolate. Its pathway is cofactor biosynthesis; (R)-pantothenate biosynthesis; (R)-pantoate from 3-methyl-2-oxobutanoate: step 1/2. Its function is as follows. Catalyzes the reversible reaction in which hydroxymethyl group from 5,10-methylenetetrahydrofolate is transferred onto alpha-ketoisovalerate to form ketopantoate. This Burkholderia vietnamiensis (strain G4 / LMG 22486) (Burkholderia cepacia (strain R1808)) protein is 3-methyl-2-oxobutanoate hydroxymethyltransferase.